The primary structure comprises 239 residues: Purine nucleoside phosphorylase DeoD-type (239 aa).

His-5 lines the a purine D-ribonucleoside pocket. Residues Gly-21 and Arg-25 each contribute to the phosphate site. Position 27 is an N6-acetyllysine (Lys-27). Phosphate-binding positions include Arg-44 and 88–91; that span reads RVGS. A purine D-ribonucleoside-binding positions include 180-182 and 204-205; these read EME and SD. Catalysis depends on Asp-205, which acts as the Proton donor.

Belongs to the PNP/UDP phosphorylase family. In terms of assembly, homohexamer; trimer of homodimers.

It catalyses the reaction a purine D-ribonucleoside + phosphate = a purine nucleobase + alpha-D-ribose 1-phosphate. It carries out the reaction a purine 2'-deoxy-D-ribonucleoside + phosphate = a purine nucleobase + 2-deoxy-alpha-D-ribose 1-phosphate. Catalyzes the reversible phosphorolytic breakdown of the N-glycosidic bond in the beta-(deoxy)ribonucleoside molecules, with the formation of the corresponding free purine bases and pentose-1-phosphate. The chain is Purine nucleoside phosphorylase DeoD-type from Escherichia coli O8 (strain IAI1).